The sequence spans 332 residues: Protein FAM9A (332 aa).

The segment covering 1–13 has biased composition (basic residues); the sequence is MEPVGRKRSRKAA. Disordered regions lie at residues 1–114 and 186–293; these read MEPV…EHTG and QKDD…PTGV. Basic and acidic residues-rich tracts occupy residues 74–91 and 98–114; these read GKDPVRDECEERNPFTET and DEHGEREPFAEKDEHTG. Residues 196 to 217 are compositionally biased toward low complexity; sequence AAAAAAEAAAAAEAAAAAAEVI. Over residues 218-275 the composition is skewed to acidic residues; sequence VVEDEEEEEKEEEEEKEEEEEEGEEEGGGEEGEEGGGGGEGEETEEEEEEEEEEEEEE. Over residues 276 to 285 the composition is skewed to basic and acidic residues; that stretch reads QIKAFQEKQK.

It belongs to the XLR/SYCP3 family. As to expression, expressed exclusively in testis.

The protein resides in the nucleus. The protein localises to the nucleolus. The sequence is that of Protein FAM9A from Homo sapiens (Human).